Reading from the N-terminus, the 429-residue chain is Protein FAM98B (429 aa).

Residues 304 to 429 (RVPDRGGRPN…GGGGGGYRRY (126 aa)) are disordered. A compositionally biased stretch (basic and acidic residues) spans 305 to 314 (VPDRGGRPNE). Over residues 332–429 (GGRGGWGGGG…GGGGGGYRRY (98 aa)) the composition is skewed to gly residues.

This sequence belongs to the FAM98 family. As to quaternary structure, homodimer. Component of a tRNA-splicing ligase complex. Interacts with FAM98A.

The protein localises to the nucleus. It localises to the cytoplasm. Positively stimulates PRMT1-induced protein arginine dimethylated arginine methylation. This chain is Protein FAM98B (Fam98b), found in Mus musculus (Mouse).